A 556-amino-acid polypeptide reads, in one-letter code: MQFDYIIIGAGSAGNVLATRLTEDPNTSVLLLEAGGPDYRFDFRTQMPAALAFPLQGKRYNWAYETEPEPFMNNRRMECGRGKGLGGSSLINGMCYIRGNALDLDNWAQEPGLENWSYLDCLPYYRKAETRDVGENDYHGGDGPVSVTTSKPGVNPLFEAMIEAGVQAGYPRTDDLNGYQQEGFGPMDRTVTPQGRRASTARGYLDQAKSRPNLTIRTHAMTDHIIFDGKRAVGVEWLEGDSTIPTRATANKEVLLCAGAIASPQILQRSGVGNAELLAEFDIPLVHELPGVGENLQDHLEMYLQYECKEPVSLYPALQWWNQPKIGAEWLFGGTGVGASNHFEAGGFIRSREEFAWPNIQYHFLPVAINYNGSNAVKEHGFQCHVGSMRSPSRGHVRIKSRDPHQHPAILFNYMSHEQDWQEFRDAIRITREIMHQPALDQYRGREISPGVECQTDEQLDEFVRNHAETAFHPCGTCKMGYDEMSVVDGEGRVHGLEGLRVVDASIMPQIITGNLNATTIMIGEKIADMIRGQEALSRSTAGYFVANGMPVRAKK.

Residue 4–33 coordinates FAD; it reads DYIIIGAGSAGNVLATRLTEDPNTSVLLLE. Histidine 473 acts as the Proton acceptor in catalysis.

Belongs to the GMC oxidoreductase family. It depends on FAD as a cofactor.

The catalysed reaction is choline + A = betaine aldehyde + AH2. It carries out the reaction betaine aldehyde + NAD(+) + H2O = glycine betaine + NADH + 2 H(+). Its pathway is amine and polyamine biosynthesis; betaine biosynthesis via choline pathway; betaine aldehyde from choline (cytochrome c reductase route): step 1/1. Involved in the biosynthesis of the osmoprotectant glycine betaine. Catalyzes the oxidation of choline to betaine aldehyde and betaine aldehyde to glycine betaine at the same rate. The protein is Oxygen-dependent choline dehydrogenase of Shigella flexneri serotype 5b (strain 8401).